We begin with the raw amino-acid sequence, 162 residues long: Large ribosomal subunit protein uL10 (162 aa).

It belongs to the universal ribosomal protein uL10 family. Part of the ribosomal stalk of the 50S ribosomal subunit. The N-terminus interacts with L11 and the large rRNA to form the base of the stalk. The C-terminus forms an elongated spine to which L12 dimers bind in a sequential fashion forming a multimeric L10(L12)X complex.

Forms part of the ribosomal stalk, playing a central role in the interaction of the ribosome with GTP-bound translation factors. The polypeptide is Large ribosomal subunit protein uL10 (Borreliella afzelii (strain PKo) (Borrelia afzelii)).